The sequence spans 116 residues: G antigen 2A (116 aa).

The tract at residues 1–116 (MSWRGRSTYR…PEEGEKQSQC (116 aa)) is disordered. Acidic residues-rich tracts occupy residues 31 to 44 (FSDE…EEGE) and 86 to 95 (ECEDGPDGQE). A compositionally biased stretch (basic and acidic residues) spans 102 to 116 (EEVKTPEEGEKQSQC).

It belongs to the GAGE family.

This is G antigen 2A (GAGE2A) from Homo sapiens (Human).